A 318-amino-acid polypeptide reads, in one-letter code: Ribosomal protein L11 methyltransferase (318 aa).

The S-adenosyl-L-methionine site is built by T159, G180, D202, and N253.

It belongs to the methyltransferase superfamily. PrmA family.

It localises to the cytoplasm. It catalyses the reaction L-lysyl-[protein] + 3 S-adenosyl-L-methionine = N(6),N(6),N(6)-trimethyl-L-lysyl-[protein] + 3 S-adenosyl-L-homocysteine + 3 H(+). Functionally, methylates ribosomal protein L11. The sequence is that of Ribosomal protein L11 methyltransferase from Lachnospira eligens (strain ATCC 27750 / DSM 3376 / VPI C15-48 / C15-B4) (Eubacterium eligens).